We begin with the raw amino-acid sequence, 228 residues long: HTH-type transcriptional regulator TfdT (228 aa).

Residues 1-58 form the HTH lysR-type domain; sequence MEIRQLKYFVAVAEAGGFGTAAQRMHISQPPLTRQIQALERDIGAKLFERTARGVELT. Residues 18 to 37 constitute a DNA-binding region (H-T-H motif); the sequence is FGTAAQRMHISQPPLTRQIQ.

It belongs to the LysR transcriptional regulatory family.

The protein localises to the cytoplasm. In terms of biological role, does not seem to be involved in the regulation of 3-chlorocatechol degradation. Does not activate the expression of its presumed target operon, tfdCDEF. This is HTH-type transcriptional regulator TfdT (tfdT) from Cupriavidus pinatubonensis (strain JMP 134 / LMG 1197) (Cupriavidus necator (strain JMP 134)).